The following is a 277-amino-acid chain: MALKKFNPVTPSTRQLVIVDRSGLYKGKPVKGLTEGLTKSGGRNNYGRITARFIGGGHKRSYRIIDFKRRKFDVVGTVERIEYDPNRTAFIALIKYDDGELSYIIAPQRLAAGDKIVAGEAVDVKPGNAMPLASMPVGTIVHNIELKPGKGGQVARSAGGYAQLVGRDQGMAILRLNSGEQRVVHGSCMATVGAVSNPDHGNINDGKAGRTVWRGKRPHNRGVTMNPVDHPHGGGEGRTSGGRHPVSPWGKPTKGKKTRSNKATDKFILRSRHQRKS.

The disordered stretch occupies residues 199 to 277; the sequence is DHGNINDGKA…ILRSRHQRKS (79 aa).

The protein belongs to the universal ribosomal protein uL2 family. As to quaternary structure, part of the 50S ribosomal subunit. Forms a bridge to the 30S subunit in the 70S ribosome.

In terms of biological role, one of the primary rRNA binding proteins. Required for association of the 30S and 50S subunits to form the 70S ribosome, for tRNA binding and peptide bond formation. It has been suggested to have peptidyltransferase activity; this is somewhat controversial. Makes several contacts with the 16S rRNA in the 70S ribosome. The sequence is that of Large ribosomal subunit protein uL2 from Mesorhizobium japonicum (strain LMG 29417 / CECT 9101 / MAFF 303099) (Mesorhizobium loti (strain MAFF 303099)).